Consider the following 247-residue polypeptide: Probable 2-phosphosulfolactate phosphatase (247 aa).

Belongs to the ComB family. The cofactor is Mg(2+).

The catalysed reaction is (2R)-O-phospho-3-sulfolactate + H2O = (2R)-3-sulfolactate + phosphate. The chain is Probable 2-phosphosulfolactate phosphatase from Clostridium perfringens (strain SM101 / Type A).